Here is a 181-residue protein sequence, read N- to C-terminus: Bifunctional protein PyrR (181 aa).

The PRPP-binding motif lies at 100–112; that stretch reads VVLVDDVIYTGRT.

The protein belongs to the purine/pyrimidine phosphoribosyltransferase family. PyrR subfamily. In terms of assembly, homodimer and homohexamer; in equilibrium.

The catalysed reaction is UMP + diphosphate = 5-phospho-alpha-D-ribose 1-diphosphate + uracil. In terms of biological role, regulates transcriptional attenuation of the pyrimidine nucleotide (pyr) operon by binding in a uridine-dependent manner to specific sites on pyr mRNA. This disrupts an antiterminator hairpin in the RNA and favors formation of a downstream transcription terminator, leading to a reduced expression of downstream genes. Also displays a weak uracil phosphoribosyltransferase activity which is not physiologically significant. This chain is Bifunctional protein PyrR, found in Pelotomaculum thermopropionicum (strain DSM 13744 / JCM 10971 / SI).